We begin with the raw amino-acid sequence, 264 residues long: uncharacterized protein (264 aa).

Residues 19–45 (AQEESMEQLKDINTKIDNSEKKISLEN) are a coiled coil.

This is an uncharacterized protein from Acanthamoeba polyphaga mimivirus (APMV).